An 84-amino-acid polypeptide reads, in one-letter code: uncharacterized protein (84 aa).

The region spanning 1-83 (MDDKFTTLPC…CKQAVFVYKI (83 aa)) is the LITAF domain. Zn(2+) is bound by residues Cys21 and Cys24. Residues 39–61 (MSWVVCTAITLACLPCCCIPFLC) form a membrane-binding amphipathic helix region. Zn(2+) is bound by residues Cys71 and Cys74.

It localises to the host membrane. This is an uncharacterized protein from Dryophytes versicolor (chameleon treefrog).